Consider the following 85-residue polypeptide: Phosphocarrier protein HPr (85 aa).

The 85-residue stretch at 1–85 (MYEKQVEITA…HLVALMDQLH (85 aa)) folds into the HPr domain. His-15 acts as the Pros-phosphohistidine intermediate in catalysis.

The protein belongs to the HPr family.

It localises to the cytoplasm. Functionally, general (non sugar-specific) component of the phosphoenolpyruvate-dependent sugar phosphotransferase system (sugar PTS). This major carbohydrate active-transport system catalyzes the phosphorylation of incoming sugar substrates concomitantly with their translocation across the cell membrane. The phosphoryl group from phosphoenolpyruvate (PEP) is transferred to the phosphoryl carrier protein HPr by enzyme I. Phospho-HPr then transfers it to the PTS EIIA domain. The protein is Phosphocarrier protein HPr (ptsH) of Vibrio cholerae serotype O1 (strain ATCC 39315 / El Tor Inaba N16961).